A 78-amino-acid chain; its full sequence is Sec-independent protein translocase protein TatA (78 aa).

Residues 1–21 form a helical membrane-spanning segment; it reads MGSLSIWHWIVVVAVILLLFG. The span at 43 to 55 shows a compositional bias: basic and acidic residues; that stretch reads MKDDEKTAEKPEP. Positions 43 to 78 are disordered; sequence MKDDEKTAEKPEPVKTINHNADGSGAARSDTGSKVI.

The protein belongs to the TatA/E family. The Tat system comprises two distinct complexes: a TatABC complex, containing multiple copies of TatA, TatB and TatC subunits, and a separate TatA complex, containing only TatA subunits. Substrates initially bind to the TatABC complex, which probably triggers association of the separate TatA complex to form the active translocon.

It is found in the cell inner membrane. Its function is as follows. Part of the twin-arginine translocation (Tat) system that transports large folded proteins containing a characteristic twin-arginine motif in their signal peptide across membranes. TatA could form the protein-conducting channel of the Tat system. The chain is Sec-independent protein translocase protein TatA from Nitrobacter winogradskyi (strain ATCC 25391 / DSM 10237 / CIP 104748 / NCIMB 11846 / Nb-255).